Here is an 82-residue protein sequence, read N- to C-terminus: Small ribosomal subunit protein bS16 (82 aa).

This sequence belongs to the bacterial ribosomal protein bS16 family.

The sequence is that of Small ribosomal subunit protein bS16 from Francisella tularensis subsp. tularensis (strain FSC 198).